A 282-amino-acid polypeptide reads, in one-letter code: MAHMRDLKRRIRSVQSTQHITRAMKMVAAAKLRKAQAQVTAARPYAAKLEEVVGRLMAAVDPETQPLAATREVKKAGYVLITADRGLAGGYNANLIRLTEERLREEGRPAALVAVGRKGRDFFRRRPVEIVKSFTDIGDNPELIQARELARQLVTMYLEGTLDEVNLIYTRFYSAIRQVPMVERLLPIATPREKKDTGDYIYEPSPEAVLRVLLPRYCEIKVYRALLEAKASEHGARMTAMDNATKNAAEMIDKFTLSFNRARQAAITNEIVEIVAGADALK.

This sequence belongs to the ATPase gamma chain family. F-type ATPases have 2 components, CF(1) - the catalytic core - and CF(0) - the membrane proton channel. CF(1) has five subunits: alpha(3), beta(3), gamma(1), delta(1), epsilon(1). CF(0) has three main subunits: a, b and c. In this bacterium the a and b subunits are transcribed but do not seem to be translated, thus the ATP synthase consists of the alpha, beta, gamma, delta, epsilon and c subunits.

The protein localises to the cell membrane. Its function is as follows. Produces ATP from ADP in the presence of a proton gradient across the membrane. The gamma chain is believed to be important in regulating ATPase activity and the flow of protons through the CF(0) complex. The chain is ATP synthase gamma chain from Moorella thermoacetica (strain ATCC 39073 / JCM 9320).